The sequence spans 158 residues: NADH-quinone oxidoreductase subunit B (158 aa).

[4Fe-4S] cluster contacts are provided by Cys-37, Cys-38, Cys-102, and Cys-132.

It belongs to the complex I 20 kDa subunit family. NDH-1 is composed of 14 different subunits. Subunits NuoB, C, D, E, F, and G constitute the peripheral sector of the complex. The cofactor is [4Fe-4S] cluster.

It localises to the cell inner membrane. The enzyme catalyses a quinone + NADH + 5 H(+)(in) = a quinol + NAD(+) + 4 H(+)(out). Functionally, NDH-1 shuttles electrons from NADH, via FMN and iron-sulfur (Fe-S) centers, to quinones in the respiratory chain. Couples the redox reaction to proton translocation (for every two electrons transferred, four hydrogen ions are translocated across the cytoplasmic membrane), and thus conserves the redox energy in a proton gradient. The protein is NADH-quinone oxidoreductase subunit B of Leptothrix cholodnii (strain ATCC 51168 / LMG 8142 / SP-6) (Leptothrix discophora (strain SP-6)).